The following is a 327-amino-acid chain: 2-keto-3-deoxygluconate permease (327 aa).

The next 10 membrane-spanning stretches (helical) occupy residues 10–30 (IPGG…TFSP), 42–62 (GMIT…GASI), 73–93 (KSGT…AIAS), 95–115 (IIPE…LALV), 139–159 (AGAF…IILG), 163–183 (IASF…VGFA), 199–219 (VQTL…LTVI), 224–244 (LLGI…LIIA), 254–274 (TAGI…VLIA), and 289–309 (SLVA…TSIW).

The protein belongs to the KdgT transporter family.

It is found in the cell inner membrane. The catalysed reaction is 2-dehydro-3-deoxy-D-gluconate(in) + H(+)(in) = 2-dehydro-3-deoxy-D-gluconate(out) + H(+)(out). In terms of biological role, catalyzes the proton-dependent uptake of 2-keto-3-deoxygluconate (KDG) into the cell. This chain is 2-keto-3-deoxygluconate permease, found in Escherichia coli O139:H28 (strain E24377A / ETEC).